A 138-amino-acid polypeptide reads, in one-letter code: F-box protein At4g12382 (138 aa).

The F-box domain maps to 7–53 (NPSFADLPSSLIEVIMSHLALKNNIRASAACKSWYEVGVSVRVVEKH).

The sequence is that of F-box protein At4g12382 from Arabidopsis thaliana (Mouse-ear cress).